The following is a 55-amino-acid chain: ATP synthase F(0) complex subunit 8 (55 aa).

The helical transmembrane segment at 7–24 (APWFSIMIMTWLTLALLI) threads the bilayer. The tract at residues 34-55 (TNPPSSKPSLTTKPTPWAWPWT) is disordered.

The protein belongs to the ATPase protein 8 family. In terms of assembly, component of the ATP synthase complex composed at least of ATP5F1A/subunit alpha, ATP5F1B/subunit beta, ATP5MC1/subunit c (homooctomer), MT-ATP6/subunit a, MT-ATP8/subunit 8, ATP5ME/subunit e, ATP5MF/subunit f, ATP5MG/subunit g, ATP5MK/subunit k, ATP5MJ/subunit j, ATP5F1C/subunit gamma, ATP5F1D/subunit delta, ATP5F1E/subunit epsilon, ATP5PF/subunit F6, ATP5PB/subunit b, ATP5PD/subunit d, ATP5PO/subunit OSCP. ATP synthase complex consists of a soluble F(1) head domain (subunits alpha(3) and beta(3)) - the catalytic core - and a membrane F(0) domain - the membrane proton channel (subunits c, a, 8, e, f, g, k and j). These two domains are linked by a central stalk (subunits gamma, delta, and epsilon) rotating inside the F1 region and a stationary peripheral stalk (subunits F6, b, d, and OSCP).

The protein localises to the mitochondrion membrane. Functionally, subunit 8, of the mitochondrial membrane ATP synthase complex (F(1)F(0) ATP synthase or Complex V) that produces ATP from ADP in the presence of a proton gradient across the membrane which is generated by electron transport complexes of the respiratory chain. ATP synthase complex consist of a soluble F(1) head domain - the catalytic core - and a membrane F(1) domain - the membrane proton channel. These two domains are linked by a central stalk rotating inside the F(1) region and a stationary peripheral stalk. During catalysis, ATP synthesis in the catalytic domain of F(1) is coupled via a rotary mechanism of the central stalk subunits to proton translocation. In vivo, can only synthesize ATP although its ATP hydrolase activity can be activated artificially in vitro. Part of the complex F(0) domain. The sequence is that of ATP synthase F(0) complex subunit 8 from Aythya americana (Redhead).